The sequence spans 101 residues: Large ribosomal subunit protein uL24 (101 aa).

This sequence belongs to the universal ribosomal protein uL24 family. As to quaternary structure, part of the 50S ribosomal subunit.

In terms of biological role, one of two assembly initiator proteins, it binds directly to the 5'-end of the 23S rRNA, where it nucleates assembly of the 50S subunit. Functionally, one of the proteins that surrounds the polypeptide exit tunnel on the outside of the subunit. The chain is Large ribosomal subunit protein uL24 from Jannaschia sp. (strain CCS1).